A 235-amino-acid polypeptide reads, in one-letter code: Sugar fermentation stimulation protein homolog (235 aa).

The protein belongs to the SfsA family.

This Serratia proteamaculans (strain 568) protein is Sugar fermentation stimulation protein homolog.